Reading from the N-terminus, the 102-residue chain is Small ribosomal subunit protein uS10 (102 aa).

Belongs to the universal ribosomal protein uS10 family. Part of the 30S ribosomal subunit.

In terms of biological role, involved in the binding of tRNA to the ribosomes. The protein is Small ribosomal subunit protein uS10 of Oenococcus oeni (strain ATCC BAA-331 / PSU-1).